We begin with the raw amino-acid sequence, 1065 residues long: Carbamoyl phosphate synthase large chain (1065 aa).

Residues 1-401 (MPKRTDIETI…AMLKAVRSLE (401 aa)) are carboxyphosphate synthetic domain. R129, R169, G175, G176, K208, I210, E215, G241, I242, H243, Q284, and E298 together coordinate ATP. An ATP-grasp 1 domain is found at 133–327 (RNLMYELGAP…IAKLAAKIAV (195 aa)). Mg(2+)-binding residues include Q284, E298, and N300. Mn(2+) contacts are provided by Q284, E298, and N300. An oligomerization domain region spans residues 402 to 546 (TGQVHLELKH…YGTYEEENES (145 aa)). A carbamoyl phosphate synthetic domain region spans residues 547-929 (IKSEKPSVVV…ALYKGLVAAG (383 aa)). One can recognise an ATP-grasp 2 domain in the interval 671 to 861 (EQALRDLNIP…MANIATKAIL (191 aa)). Positions 707, 746, 748, 752, 777, 778, 779, 780, 820, and 832 each coordinate ATP. Mg(2+)-binding residues include Q820, E832, and N834. Mn(2+)-binding residues include Q820, E832, and N834. The MGS-like domain occupies 930–1065 (MEIRTEGTVL…EEMPKAEVVH (136 aa)). The interval 930 to 1065 (MEIRTEGTVL…EEMPKAEVVH (136 aa)) is allosteric domain.

This sequence belongs to the CarB family. In terms of assembly, composed of two chains; the small (or glutamine) chain promotes the hydrolysis of glutamine to ammonia, which is used by the large (or ammonia) chain to synthesize carbamoyl phosphate. Tetramer of heterodimers (alpha,beta)4. The cofactor is Mg(2+). Mn(2+) is required as a cofactor.

The catalysed reaction is hydrogencarbonate + L-glutamine + 2 ATP + H2O = carbamoyl phosphate + L-glutamate + 2 ADP + phosphate + 2 H(+). It catalyses the reaction hydrogencarbonate + NH4(+) + 2 ATP = carbamoyl phosphate + 2 ADP + phosphate + 2 H(+). The protein operates within amino-acid biosynthesis; L-arginine biosynthesis; carbamoyl phosphate from bicarbonate: step 1/1. It functions in the pathway pyrimidine metabolism; UMP biosynthesis via de novo pathway; (S)-dihydroorotate from bicarbonate: step 1/3. Large subunit of the glutamine-dependent carbamoyl phosphate synthetase (CPSase). CPSase catalyzes the formation of carbamoyl phosphate from the ammonia moiety of glutamine, carbonate, and phosphate donated by ATP, constituting the first step of 2 biosynthetic pathways, one leading to arginine and/or urea and the other to pyrimidine nucleotides. The large subunit (synthetase) binds the substrates ammonia (free or transferred from glutamine from the small subunit), hydrogencarbonate and ATP and carries out an ATP-coupled ligase reaction, activating hydrogencarbonate by forming carboxy phosphate which reacts with ammonia to form carbamoyl phosphate. The polypeptide is Carbamoyl phosphate synthase large chain (Lysinibacillus sphaericus (strain C3-41)).